The sequence spans 295 residues: Nuclear transcription factor Y subunit A-2 (295 aa).

Residues 139–165 carry the Subunit association domain (SAD) motif; it reads YVNSKQYHGIIRRRQSRAKAAAVLDQK. The NFYA/HAP2-type DNA-binding region spans 173-198; the sequence is KPYMHHSRHLHALRRPRGSGGRFLNT. The segment covering 178 to 189 has biased composition (basic residues); that stretch reads HSRHLHALRRPR. Residues 178-244 are disordered; it reads HSRHLHALRR…VVHPENGTMN (67 aa). Polar residues predominate over residues 197 to 209; sequence NTKSQNLENSGTN. A compositionally biased stretch (low complexity) spans 216–233; it reads SMQIQSQPKPQQSNSQNS.

The protein belongs to the NFYA/HAP2 subunit family. As to quaternary structure, heterotrimeric transcription factor composed of three components, NF-YA, NF-YB and NF-YC. NF-YB and NF-YC must interact and dimerize for NF-YA association and DNA binding. Component of a heat stress-inducible transcriptional complex with NF-YA and NF-YB subunits made, at least, of NFYA2, NFYB3 and DPB3-1 in cooperation with DREB2A. As to expression, ubiquitous. Expressed in seedlings, roots, petioles, hypocotyls, reproductive organ tissues and leaves.

The protein resides in the nucleus. Functionally, stimulates the transcription of various genes by recognizing and binding to a CCAAT motif in promoters. Promotes the expression of heat stress-inducible genes by contributing to the formation of a heat stress-specific transcriptional complex with NF-Y subunits (e.g. DPB3-1, NF-YA2 and NF-YB3) and DREB2A at the promoter of target genes, thus promoting heat tolerance. The polypeptide is Nuclear transcription factor Y subunit A-2 (Arabidopsis thaliana (Mouse-ear cress)).